A 233-amino-acid polypeptide reads, in one-letter code: Biosynthetic peptidoglycan transglycosylase (233 aa).

Residues 8 to 28 traverse the membrane as a helical segment; it reads LIALPVGIFIFFNAYVYGNII.

Belongs to the glycosyltransferase 51 family.

It localises to the cell inner membrane. It catalyses the reaction [GlcNAc-(1-&gt;4)-Mur2Ac(oyl-L-Ala-gamma-D-Glu-L-Lys-D-Ala-D-Ala)](n)-di-trans,octa-cis-undecaprenyl diphosphate + beta-D-GlcNAc-(1-&gt;4)-Mur2Ac(oyl-L-Ala-gamma-D-Glu-L-Lys-D-Ala-D-Ala)-di-trans,octa-cis-undecaprenyl diphosphate = [GlcNAc-(1-&gt;4)-Mur2Ac(oyl-L-Ala-gamma-D-Glu-L-Lys-D-Ala-D-Ala)](n+1)-di-trans,octa-cis-undecaprenyl diphosphate + di-trans,octa-cis-undecaprenyl diphosphate + H(+). It functions in the pathway cell wall biogenesis; peptidoglycan biosynthesis. Its function is as follows. Peptidoglycan polymerase that catalyzes glycan chain elongation from lipid-linked precursors. This chain is Biosynthetic peptidoglycan transglycosylase, found in Neisseria meningitidis serogroup A / serotype 4A (strain DSM 15465 / Z2491).